The sequence spans 682 residues: Probable methyltransferase PMT12 (682 aa).

Residues 1 to 11 (MKLFLNSNLLR) lie on the Cytoplasmic side of the membrane. A helical; Signal-anchor for type II membrane protein membrane pass occupies residues 12-32 (NSIFFKISAFVLISVACFFLG). Topologically, residues 33-682 (KHWSEDGFRR…KRRKTKGKRA (650 aa)) are lumenal. N-linked (GlcNAc...) asparagine glycosylation is found at Asn-67, Asn-103, Asn-125, Asn-155, Asn-173, Asn-193, Asn-273, Asn-350, Asn-395, Asn-419, Asn-600, and Asn-625.

It belongs to the methyltransferase superfamily.

The protein localises to the golgi apparatus membrane. The polypeptide is Probable methyltransferase PMT12 (Arabidopsis thaliana (Mouse-ear cress)).